The sequence spans 203 residues: Snake venom metalloproteinase adamalysin-2 (203 aa).

In terms of domain architecture, Peptidase M12B spans 7–203 (RYIELVVVAD…YKPQCILNKP (197 aa)). Ca(2+)-binding residues include glutamate 10 and aspartate 94. Cystine bridges form between cysteine 118–cysteine 198 and cysteine 158–cysteine 165. Histidine 143 lines the Zn(2+) pocket. The active site involves glutamate 144. Residues histidine 147 and histidine 153 each contribute to the Zn(2+) site. Ca(2+) is bound by residues cysteine 198 and asparagine 201.

This sequence belongs to the venom metalloproteinase (M12B) family. P-I subfamily. Monomer. Zn(2+) is required as a cofactor. As to expression, expressed by the venom gland.

It localises to the secreted. It carries out the reaction Cleavage of 1-Phe-|-Val-2, 5-His-|-Leu-6, 14-Ala-|-Leu-15, 15-Leu-|-Tyr-16, and 16-Tyr-|-Leu-17 of insulin B chain.. Functionally, has no significant hemorrhagic activity, but inactivates serpins by limited proteolysis of their reactive-site loops. The protein is Snake venom metalloproteinase adamalysin-2 of Crotalus adamanteus (Eastern diamondback rattlesnake).